Reading from the N-terminus, the 1176-residue chain is MRLTQLKLAGFKSFVDPTVIPVPSQLVGVVGPNGCGKSNIIDAVRWVLGEAKASELRGESMQDVIFNGSGNRKPAARASVEMVFDNSEGRAAGQWSTYSEIAVRRVLTRDGTSSYYVNNQQVRRRDIHDIFLGTGLGARGYAIIGQGMINRLIEARPEELRVFLEEAAGVSRYKERRRETENRLSDTRENLTRVEDILRELGSQLEKLEAQAEVARQYRELQADGEKKQFALWLLKETGARDERQRKSQEMAQAQTNLEAAIANLRSGEAELESRRQAHYAAGDAVHAAQGQLYEANAQVSRLEAEIRHVVDSRNRLQARREQLQQQIAEWDAQQTHCVEQIAQAEDDLATGAARTEEARALAEEAHASLPAVEARVRDAAASRDEMRSSLARVEQNLALAAQTQRDADRQLQNLEQRRERLQQELRELHAPDPVRLEQLAGDRAAGEDQLEEAQQELAALEARVPEADAERSRAQAAAQQDAQNLARLEARLAALVKLQEDVQKQGALEPWLAKHELAGLGRLWQKLHIEPGWENALEAVLRERMAALEVRNLDWSRAFAEDAPPARLAFYQMPAAAPTPAAPQGLTPLASLLRITDPDLRTLLNDWLGNIYTAPDLGQALAARATLPAGAACVVPAGHLVDAHSVRFYAPDSEQAGLLARQQEIENLQREIKAQQLIADQARAAVARAESAWQQVSQAVAPARQRVAEITRRVHDIQLEHSRLQQQAEQSGERAARLRQDLEEISAHEEDLRATREEAEARFEALDAELAEHQSRFADAEIAGEDLAAQAEAARARLRELERAAQEAEFAERGVQSRIADLQRNRQLAADQSQRAAVELEQLQADLADLDASASQAGLQDALEVRAEREEALSRARQELDNLSALLRGADEERMQQERALEPLRARITELQLQEQAARLAEEQFTEQLNAREVDREALAQELAAMPDEWRRANWLQSEVGRISRQIDSLGSVNLAALDELNASRERKEFLDSQQQDLLTAIDTLEDAIRKIDRETRELLQATFDTVNGHFGELFPKLFGGGEAKLTMTGDEILDAGVQVMAQPPGKRNSTIHLLSGGEKALTATALVFALFKLNPAPFCLLDEVDAPLDDANTERYANLVSSMSEQTQFLFISHNKIAMQMAKQLVGVTMQEQGVSRIVAVDIDSAVQMAAEAA.

Residue 32-39 (PNGCGKSN) coordinates ATP. Residues 169 to 506 (GVSRYKERRR…VKLQEDVQKQ (338 aa)) are a coiled coil. Positions 521–623 (LGRLWQKLHI…TAPDLGQALA (103 aa)) constitute an SMC hinge domain. Coiled coils occupy residues 653 to 947 (DSEQ…LAAM) and 987 to 1024 (ERKE…LQAT).

The protein belongs to the SMC family. Homodimer.

Its subcellular location is the cytoplasm. Required for chromosome condensation and partitioning. In Bordetella petrii (strain ATCC BAA-461 / DSM 12804 / CCUG 43448), this protein is Chromosome partition protein Smc.